The chain runs to 51 residues: UPF0181 protein VV2_0310 (51 aa).

Belongs to the UPF0181 family.

The polypeptide is UPF0181 protein VV2_0310 (Vibrio vulnificus (strain CMCP6)).